The following is a 375-amino-acid chain: Glutamate 5-kinase (375 aa).

Position 3 (K3) interacts with ATP. The substrate site is built by S44, D131, and N143. Residues 163–164 (SD) and 205–211 (TGGMVTK) contribute to the ATP site. Positions 269–346 (EGTLWVDDGA…GDIEALLGYR (78 aa)) constitute a PUA domain.

This sequence belongs to the glutamate 5-kinase family.

The protein localises to the cytoplasm. The catalysed reaction is L-glutamate + ATP = L-glutamyl 5-phosphate + ADP. The protein operates within amino-acid biosynthesis; L-proline biosynthesis; L-glutamate 5-semialdehyde from L-glutamate: step 1/2. Functionally, catalyzes the transfer of a phosphate group to glutamate to form L-glutamate 5-phosphate. The chain is Glutamate 5-kinase from Rhodospirillum rubrum (strain ATCC 11170 / ATH 1.1.1 / DSM 467 / LMG 4362 / NCIMB 8255 / S1).